The chain runs to 589 residues: Oligo-1,6-glucosidase IMA3 (589 aa).

Residue aspartate 215 is the Nucleophile of the active site. Glutamate 277 serves as the catalytic Proton donor.

This sequence belongs to the glycosyl hydrolase 13 family.

The protein localises to the cytoplasm. It carries out the reaction Hydrolysis of (1-&gt;6)-alpha-D-glucosidic linkages in some oligosaccharides produced from starch and glycogen by alpha-amylase, and in isomaltose.. Its function is as follows. Alpha-glucosidase with broad substrate specificity for alpha-1,4- and alpha-1,6-glucosides. Not required for isomaltose utilization, but overexpression allows the IMA1 null mutant to grow on isomaltose. The chain is Oligo-1,6-glucosidase IMA3 (IMA3) from Saccharomyces cerevisiae (strain ATCC 204508 / S288c) (Baker's yeast).